A 245-amino-acid polypeptide reads, in one-letter code: Syntaxin-61 (245 aa).

Over 1-224 (MSSAQDPFYI…VMKKAGAKGQ (224 aa)) the chain is Cytoplasmic. One can recognise a t-SNARE coiled-coil homology domain in the interval 153–215 (MLLIKQQDEE…EFVQKKVGMV (63 aa)). A helical; Anchor for type IV membrane protein transmembrane segment spans residues 225 to 245 (MMMICFLLVLFIILFVLVFLT).

Belongs to the syntaxin family. In terms of assembly, interacts with VTI12 and either SYP41, SYP42 or SYP51 in the trans-Golgi network or with VTI11 and SYP51 in the prevacuolar compartment to form t-SNARE complexes. Core constituent of the SNARE complex required for membrane fusion at the trans-Golgi network. Also observed in the SYP121-complex and cellulose synthases. Colocalizes with PIP2-7 and SYP121 in trafficking vesicles and at the plasma membrane. Interacts with SYP121 and PIP2-7. In terms of tissue distribution, expressed in root, leaf, stem, flower and silique, but not in hypocotyl or young leaf. Strong expression in the vasculature and in guard cells of the leaf epidermis.

Its subcellular location is the golgi apparatus. The protein resides in the trans-Golgi network membrane. It is found in the prevacuolar compartment membrane. Vesicle trafficking protein that functions in the secretory pathway; the fusion of phospholipid vesicles containing SYP61 and VTI12 is triggered by YKT61 and YKT62. Together with VTI12, required for membrane fusion. Involved in osmotic stress tolerance and in abscisic acid (ABA) regulation of stomatal responses. Plays a role in the exocytic trafficking of cellulose synthases (CESAs) and the transport of cell wall components to the plasma membrane. Together with SYP121, regulates the post-Golgi trafficking of the aquaporin PIP2-7 to the plasma membrane, thus modulating cell membrane water permeability. In Arabidopsis thaliana (Mouse-ear cress), this protein is Syntaxin-61.